The sequence spans 202 residues: Transcription antitermination protein NusB (202 aa).

The span at 1-11 shows a compositional bias: basic and acidic residues; that stretch reads MTEERTADNKA. Disordered stretches follow at residues 1-21 and 169-202; these read MTEERTADNKAAKAASFKRHG and SAAKRAEQAEQPGQAESDELDGLLDGVVQESDEA.

The protein belongs to the NusB family.

Involved in transcription antitermination. Required for transcription of ribosomal RNA (rRNA) genes. Binds specifically to the boxA antiterminator sequence of the ribosomal RNA (rrn) operons. The sequence is that of Transcription antitermination protein NusB from Corynebacterium jeikeium (strain K411).